The following is a 520-amino-acid chain: Cryptochrome DASH (520 aa).

Residues 5-141 (RTVICLLRND…RVQTFWGSTL (137 aa)) enclose the Photolyase/cryptochrome alpha/beta domain. The tract at residues 479–504 (SRHVNNKSSGPSSSKGRKGSSYTARQ) is disordered.

The protein belongs to the DNA photolyase class-1 family. Requires FAD as cofactor. It depends on (6R)-5,10-methylene-5,6,7,8-tetrahydrofolate as a cofactor.

In terms of biological role, may have a photoreceptor function. Has weak cyclobutyl pyrimidine photolyase activity when expressed in E.coli and when tested in vitro. The polypeptide is Cryptochrome DASH (cry-dash) (Danio rerio (Zebrafish)).